The following is a 508-amino-acid chain: MNNTYYITTPIYYVNDIPHIGHAYTSVASDVIARFMRLRGFDVMFLTGTDEHGQKVEKAAINKNIDPQKFTDQTSESFRHLMTAMHISNDDFIRTTEHRHKKAVAVFWQKLLDNGTIYEGFYEGWYAVRDEAFFDESELTRDGLAPTGAPVEWVKEPSYFFNLSKWQDKLLEFYEANPDFIRPISRRNEVISFVKSGLKDLSVSRTTFNWGIKVPNNEKHVIYVWLDALANYISALGYLDEQSNYNKFWPADLHVVGKDILRFHAVYWPAFLMAAEVPLPKTIMAHGWWTNEGQKISKSLGNTIDPIKLIDEFGVDQVRYFLMREVTFGADGNFARSNLITRINSELSNKIGNLLQRTTSFVYKNNDAKVPLLTQGVIDKIYELPILKTASKFVEQNILLMDKTEINKILENIINLAEEANIYIDSEAPWNLKKTDPDKMLEVLYALLEVLRYIAIMLLPFIPSSANKMLDQLGVNKEERLFKHLIRDYTLTAGSNILEPTIIFPKFE.

The short motif at 12 to 22 (YYVNDIPHIGH) is the 'HIGH' region element. The 'KMSKS' region signature appears at 295 to 299 (KISKS). ATP is bound at residue Lys-298.

The protein belongs to the class-I aminoacyl-tRNA synthetase family. MetG type 2B subfamily. As to quaternary structure, monomer.

The protein localises to the cytoplasm. It carries out the reaction tRNA(Met) + L-methionine + ATP = L-methionyl-tRNA(Met) + AMP + diphosphate. Its function is as follows. Is required not only for elongation of protein synthesis but also for the initiation of all mRNA translation through initiator tRNA(fMet) aminoacylation. The sequence is that of Methionine--tRNA ligase from Rickettsia conorii (strain ATCC VR-613 / Malish 7).